Reading from the N-terminus, the 223-residue chain is Global nitrogen regulator (223 aa).

One can recognise an HTH crp-type domain in the interval 143–216 (RDMGSRLVSF…KKKITVHKPV (74 aa)). Residues 176–195 (HQAIAEAIGSTRVTVTRLLG) constitute a DNA-binding region (H-T-H motif).

Functionally, required for full expression of proteins subject to ammonium repression. Transcriptional activator of genes subject to nitrogen control. Its function is as follows. Has affinity for the xisA upstream region. Binds to a 66 bp region containing three repeats of the consensus recognition sequence 5'-ACATT-3'. This is Global nitrogen regulator (ntcA) from Nostoc sp. (strain PCC 7120 / SAG 25.82 / UTEX 2576).